The primary structure comprises 55 residues: Spermatid nuclear transition protein 1 (55 aa).

Residues 1–42 show a composition bias toward basic residues; it reads MSTSRKLKTHGMRRGKNRAPHKGVKRGGSKRKYRKSVLKSRK. Residues 1-55 are disordered; sequence MSTSRKLKTHGMRRGKNRAPHKGVKRGGSKRKYRKSVLKSRKRGDDASRNYRSHL. Phosphoserine is present on residues serine 36 and serine 40.

Belongs to the nuclear transition protein 1 family. In terms of tissue distribution, testis-specific.

Its subcellular location is the nucleus. The protein localises to the chromosome. Functionally, plays a key role in the replacement of histones to protamine in the elongating spermatids of mammals. In condensing spermatids, loaded onto the nucleosomes, where it promotes the recruitment and processing of protamines, which are responsible for histone eviction. The histone H2AB1-H2BC1/TH2B dimer is required for loading of TNP1 onto chromatin. The sequence is that of Spermatid nuclear transition protein 1 from Mus musculus (Mouse).